The primary structure comprises 336 residues: MEPRAAVLKLIEHKHLTTLEAESFMNHVMKGEVSEILLSSFLTAMRFNGESVEEVLGCTLALRKNALRPKTVFPFDLLDTCGTGGDGQGTINISTLSAIVLASLGIKVAKHGNRSVSSHTGSSDILTRLGYQTETTQEEVEAHLVNRGFTFLFAPMWHPSMKHAGPVRKELGFRTVFNMIGPLSNPFSPQFQIIGVYQPELMELFIKVLQSLGLKRALVCHSRDGLDEFSIFQITDYTFLENGVISRHSFDPKILGLSSLNKEEVYASSSDHAEVLARKVLNSESIAGTHAVALNAGAGLFVMGKIDTIEQGYQIAKEAILSGKTKKYFEDLISKE.

Residues Gly-82, 85 to 86 (GD), Thr-90, 92 to 95 (NIST), 110 to 118 (KHGNRSVSS), and Ser-122 contribute to the 5-phospho-alpha-D-ribose 1-diphosphate site. Anthranilate is bound at residue Gly-82. Mg(2+) is bound at residue Ser-94. Asn-113 contacts anthranilate. Anthranilate is bound at residue Arg-168. The Mg(2+) site is built by Asp-227 and Glu-228.

This sequence belongs to the anthranilate phosphoribosyltransferase family. In terms of assembly, homodimer. Mg(2+) serves as cofactor.

It catalyses the reaction N-(5-phospho-beta-D-ribosyl)anthranilate + diphosphate = 5-phospho-alpha-D-ribose 1-diphosphate + anthranilate. The protein operates within amino-acid biosynthesis; L-tryptophan biosynthesis; L-tryptophan from chorismate: step 2/5. Functionally, catalyzes the transfer of the phosphoribosyl group of 5-phosphorylribose-1-pyrophosphate (PRPP) to anthranilate to yield N-(5'-phosphoribosyl)-anthranilate (PRA). The chain is Anthranilate phosphoribosyltransferase from Leptospira interrogans serogroup Icterohaemorrhagiae serovar Lai (strain 56601).